The primary structure comprises 283 residues: MKHFVVIANAYKDRDFALTNKIVAYIEQKGGTAKGLMSNVEAISDNEFELEDIPQDTQCILVLGGDGTLIRAATRVETLEIPLMGVNLGTLGYLCEVEEATVFDAIDSLMADKYMTEDRIMLIGHKRGSETSRVALNDIVIHRKGNLQILSLNVYVNGEFLNNYHADGIIVATPTGSTGYSMSAGGPIVDPKGDMILLTPNNAHNLTSKSIVLSGDDEIEIEILSRREQNDELACVSYDGDTTAELAVGDRFVISRAANHTKICKLHQRSFLEILRKKMGNYS.

D66 acts as the Proton acceptor in catalysis. Residues 66–67, R71, 137–138, H165, D167, and 178–183 each bind NAD(+); these read DG, ND, and TGYSMS.

This sequence belongs to the NAD kinase family. A divalent metal cation serves as cofactor.

The protein localises to the cytoplasm. It catalyses the reaction NAD(+) + ATP = ADP + NADP(+) + H(+). Functionally, involved in the regulation of the intracellular balance of NAD and NADP, and is a key enzyme in the biosynthesis of NADP. Catalyzes specifically the phosphorylation on 2'-hydroxyl of the adenosine moiety of NAD to yield NADP. The protein is NAD kinase of Agathobacter rectalis (strain ATCC 33656 / DSM 3377 / JCM 17463 / KCTC 5835 / VPI 0990) (Eubacterium rectale).